The sequence spans 119 residues: Large ribosomal subunit protein bL20 (119 aa).

Belongs to the bacterial ribosomal protein bL20 family.

Functionally, binds directly to 23S ribosomal RNA and is necessary for the in vitro assembly process of the 50S ribosomal subunit. It is not involved in the protein synthesizing functions of that subunit. The chain is Large ribosomal subunit protein bL20 from Nitrobacter winogradskyi (strain ATCC 25391 / DSM 10237 / CIP 104748 / NCIMB 11846 / Nb-255).